A 315-amino-acid polypeptide reads, in one-letter code: Mitochondrial glutamate carrier 2 (315 aa).

Solcar repeat units follow at residues 6-92 (LSIT…FRRL), 100-210 (RNLK…LNNL), and 219-308 (ASFA…GIGE). 3 helical membrane passes run 12–32 (LING…IDLA), 61–81 (FFGM…EKAI), and 106–126 (MLAG…MEML). A disordered region spans residues 141–160 (QGSASAPSTSRSYTTGSAST). Positions 142–159 (GSASAPSTSRSYTTGSAS) are enriched in polar residues. Residue Ser-145 is modified to Phosphoserine. The next 3 membrane-spanning stretches (helical) occupy residues 185–205 (GLGA…PLFA), 225–245 (FVSG…LDVL), and 288–308 (ALVI…GIGE).

This sequence belongs to the mitochondrial carrier (TC 2.A.29) family. In terms of tissue distribution, expressed in brain, to a lesser extent in testis, and poorly in all the other tissues.

Its subcellular location is the mitochondrion inner membrane. The enzyme catalyses L-glutamate(in) + H(+)(in) = L-glutamate(out) + H(+)(out). Functionally, responsible for the transport of glutamate from the cytosol into the mitochondrial matrix with the concomitant import of a proton (symport system). The sequence is that of Mitochondrial glutamate carrier 2 from Homo sapiens (Human).